The sequence spans 431 residues: Adenylosuccinate synthetase 2 (431 aa).

Residues 13–19 (GDEGKGK) and 41–43 (GHT) each bind GTP. Catalysis depends on D14, which acts as the Proton acceptor. 2 residues coordinate Mg(2+): D14 and G41. Residues 14–17 (DEGK), 39–42 (NAGH), T130, R144, Q225, T240, and R304 each bind IMP. H42 acts as the Proton donor in catalysis. 300–306 (SVTGRPR) serves as a coordination point for substrate. GTP-binding positions include R306, 332-334 (KLD), and 414-416 (STG).

This sequence belongs to the adenylosuccinate synthetase family. In terms of assembly, homodimer. The cofactor is Mg(2+).

The protein localises to the cytoplasm. It carries out the reaction IMP + L-aspartate + GTP = N(6)-(1,2-dicarboxyethyl)-AMP + GDP + phosphate + 2 H(+). The protein operates within purine metabolism; AMP biosynthesis via de novo pathway; AMP from IMP: step 1/2. In terms of biological role, plays an important role in the de novo pathway of purine nucleotide biosynthesis. Catalyzes the first committed step in the biosynthesis of AMP from IMP. The protein is Adenylosuccinate synthetase 2 of Chromobacterium violaceum (strain ATCC 12472 / DSM 30191 / JCM 1249 / CCUG 213 / NBRC 12614 / NCIMB 9131 / NCTC 9757 / MK).